Here is a 365-residue protein sequence, read N- to C-terminus: Casein kinase I homolog hhp1 (365 aa).

The 269-residue stretch at tyrosine 11–phenylalanine 279 folds into the Protein kinase domain. ATP-binding positions include isoleucine 17–isoleucine 25 and lysine 40. Aspartate 130 acts as the Proton acceptor in catalysis. The segment covering aspartate 301 to glutamine 311 has biased composition (low complexity). Positions aspartate 301–asparagine 365 are disordered. The segment covering isoleucine 343–asparagine 365 has biased composition (polar residues).

It belongs to the protein kinase superfamily. CK1 Ser/Thr protein kinase family. Casein kinase I subfamily.

It localises to the nucleus. The catalysed reaction is L-seryl-[protein] + ATP = O-phospho-L-seryl-[protein] + ADP + H(+). The enzyme catalyses L-threonyl-[protein] + ATP = O-phospho-L-threonyl-[protein] + ADP + H(+). Involved in DNA repair. Has a probable role in repairing alkylated DNA and may regulate the activity of protein(s) involved in double strand break repair caused by gamma rays. This is Casein kinase I homolog hhp1 (hhp1) from Schizosaccharomyces pombe (strain 972 / ATCC 24843) (Fission yeast).